An 83-amino-acid chain; its full sequence is Disintegrin isoform D-3 (83 aa).

In terms of domain architecture, Disintegrin spans 2–83; that stretch reads PPVCGNELLE…GKSSDCPWNH (82 aa). Intrachain disulfides connect Cys5/Cys24, Cys16/Cys34, Cys18/Cys29, Cys28/Cys51, Cys42/Cys48, Cys47/Cys72, and Cys60/Cys79. Positions 64-66 match the Cell attachment site motif; that stretch reads RGD.

This sequence belongs to the venom metalloproteinase (M12B) family. P-II subfamily. P-IIa sub-subfamily. As to quaternary structure, monomer (disintegrin). As to expression, expressed by the venom gland.

The protein localises to the secreted. Functionally, inhibits fibrinogen interaction with platelets. Acts by binding to alpha-IIb/beta-3 (ITGA2B/ITGB3) on the platelet surface and inhibits aggregation induced by ADP, thrombin, platelet-activating factor and collagen. The sequence is that of Disintegrin isoform D-3 from Bitis arietans (African puff adder).